Here is a 118-residue protein sequence, read N- to C-terminus: Large ribosomal subunit protein bL20 (118 aa).

Belongs to the bacterial ribosomal protein bL20 family.

Functionally, binds directly to 23S ribosomal RNA and is necessary for the in vitro assembly process of the 50S ribosomal subunit. It is not involved in the protein synthesizing functions of that subunit. In Hydrogenovibrio crunogenus (strain DSM 25203 / XCL-2) (Thiomicrospira crunogena), this protein is Large ribosomal subunit protein bL20.